We begin with the raw amino-acid sequence, 207 residues long: dTTP/UTP pyrophosphatase (207 aa).

D86 (proton acceptor) is an active-site residue.

Belongs to the Maf family. YhdE subfamily. Requires a divalent metal cation as cofactor.

It is found in the cytoplasm. The catalysed reaction is dTTP + H2O = dTMP + diphosphate + H(+). The enzyme catalyses UTP + H2O = UMP + diphosphate + H(+). Its function is as follows. Nucleoside triphosphate pyrophosphatase that hydrolyzes dTTP and UTP. May have a dual role in cell division arrest and in preventing the incorporation of modified nucleotides into cellular nucleic acids. This is dTTP/UTP pyrophosphatase from Nitrosospira multiformis (strain ATCC 25196 / NCIMB 11849 / C 71).